The primary structure comprises 158 residues: Endoribonuclease YbeY (158 aa).

Residues His-120, His-124, and His-130 each coordinate Zn(2+).

The protein belongs to the endoribonuclease YbeY family. It depends on Zn(2+) as a cofactor.

Its subcellular location is the cytoplasm. Functionally, single strand-specific metallo-endoribonuclease involved in late-stage 70S ribosome quality control and in maturation of the 3' terminus of the 16S rRNA. This chain is Endoribonuclease YbeY, found in Spiroplasma citri.